The primary structure comprises 841 residues: Envelope glycoprotein H (841 aa).

Positions 1–17 (MFALVLAVVILPLWTTA) are cleaved as a signal peptide. Residues N18, N45, and N217 are each glycosylated (N-linked (GlcNAc...) asparagine; by host). The Virion surface portion of the chain corresponds to 18 to 802 (NKSYVTPTPA…ERRQAIRMSG (785 aa)). The interaction with gL stretch occupies residues 246–309 (DSGRVEVNIG…DPGPSYRVYL (64 aa)). Residues N317, N499, N522, N760, and N783 are each glycosylated (N-linked (GlcNAc...) asparagine; by host). The helical transmembrane segment at 803–823 (QYLGASLGGAFLAVVGFGIIG) threads the bilayer. Residues 824 to 841 (WMLCGNSRLREYNKIPLT) lie on the Intravirion side of the membrane.

This sequence belongs to the herpesviridae glycoprotein H family. In terms of assembly, interacts with glycoprotein L (gL); this interaction is necessary for the correct processing and cell surface expression of gH. The heterodimer gH/gL seems to interact with gB trimers during fusion. In terms of processing, N-glycosylated, O-glycosylated, and sialylated.

The protein localises to the virion membrane. The protein resides in the host cell membrane. Its subcellular location is the host endosome membrane. In terms of biological role, the heterodimer glycoprotein H-glycoprotein L is required for the fusion of viral and plasma membranes leading to virus entry into the host cell. Following initial binding to host receptor, membrane fusion is mediated by the fusion machinery composed of gB and the heterodimer gH/gL. May also be involved in the fusion between the virion envelope and the outer nuclear membrane during virion morphogenesis. The polypeptide is Envelope glycoprotein H (Varicella-zoster virus (strain Oka vaccine) (HHV-3)).